The following is a 261-amino-acid chain: Imidazole glycerol phosphate synthase subunit HisF (261 aa).

Active-site residues include Asp-12 and Asp-131.

The protein belongs to the HisA/HisF family. As to quaternary structure, heterodimer of HisH and HisF.

The protein resides in the cytoplasm. The enzyme catalyses 5-[(5-phospho-1-deoxy-D-ribulos-1-ylimino)methylamino]-1-(5-phospho-beta-D-ribosyl)imidazole-4-carboxamide + L-glutamine = D-erythro-1-(imidazol-4-yl)glycerol 3-phosphate + 5-amino-1-(5-phospho-beta-D-ribosyl)imidazole-4-carboxamide + L-glutamate + H(+). It participates in amino-acid biosynthesis; L-histidine biosynthesis; L-histidine from 5-phospho-alpha-D-ribose 1-diphosphate: step 5/9. In terms of biological role, IGPS catalyzes the conversion of PRFAR and glutamine to IGP, AICAR and glutamate. The HisF subunit catalyzes the cyclization activity that produces IGP and AICAR from PRFAR using the ammonia provided by the HisH subunit. This Brucella anthropi (strain ATCC 49188 / DSM 6882 / CCUG 24695 / JCM 21032 / LMG 3331 / NBRC 15819 / NCTC 12168 / Alc 37) (Ochrobactrum anthropi) protein is Imidazole glycerol phosphate synthase subunit HisF.